The primary structure comprises 589 residues: ATP-dependent lipid A-core flippase (589 aa).

6 helical membrane passes run 33 to 53, 70 to 90, 148 to 168, 170 to 190, 262 to 282, and 283 to 303; these read VLAI…AWII, LWVP…TFAS, VVVL…MTYL, GWLV…VTAA, LGAV…VILE, and TISP…LPPL. Positions 33–315 constitute an ABC transmembrane type-1 domain; sequence VLAIVCMVLA…VIGVNAEIQK (283 aa). In terms of domain architecture, ABC transporter spans 347–583; the sequence is IEFDRVAFRY…NGHYASLHRV (237 aa). Residue 381-388 coordinates ATP; it reads GRSGSGKT.

Belongs to the ABC transporter superfamily. Lipid exporter (TC 3.A.1.106) family. In terms of assembly, homodimer.

It localises to the cell inner membrane. It catalyses the reaction ATP + H2O + lipid A-core oligosaccharideSide 1 = ADP + phosphate + lipid A-core oligosaccharideSide 2.. Its function is as follows. Involved in lipopolysaccharide (LPS) biosynthesis. Translocates lipid A-core from the inner to the outer leaflet of the inner membrane. Transmembrane domains (TMD) form a pore in the inner membrane and the ATP-binding domain (NBD) is responsible for energy generation. The sequence is that of ATP-dependent lipid A-core flippase from Alkalilimnicola ehrlichii (strain ATCC BAA-1101 / DSM 17681 / MLHE-1).